The following is a 266-amino-acid chain: Nus factor SuhB (266 aa).

86 to 89 (LDGI) provides a ligand contact to substrate.

The protein belongs to the inositol monophosphatase superfamily. In terms of assembly, homodimer. The rRNA transcription and antitermination complex (rrnTAC) consists of RNA polymerase (RNAP), NusA, NusB, NusE (rpsJ), NusG, SubB, ribosomal protein S4, DNA and precursor rRNA; S4 is more flexible than other subunits. It depends on Mg(2+) as a cofactor.

Its subcellular location is the cytoplasm. The catalysed reaction is a myo-inositol phosphate + H2O = myo-inositol + phosphate. Part of the processive rRNA transcription and antitermination complex (rrnTAC). The complex forms an RNA-chaperone ring around the RNA exit tunnel of RNA polymerase (RNAP). It supports rapid transcription and antitermination of rRNA operons, cotranscriptional rRNA folding, and annealing of distal rRNA regions to allow correct ribosome biogenesis. This subunit may play a central role in organizing the structure. The protein is Nus factor SuhB (suhB) of Buchnera aphidicola subsp. Baizongia pistaciae (strain Bp).